A 159-amino-acid chain; its full sequence is MNIKIICVGKLKEKYFKQGIAEYAKRMSKFAKFQIVEVPDEKAPESLSNAEMENVKAKEGQRILEKIKDRDYVYALAILGKERSSEEFAAEIDKLTTYGHSDIDFVIGGSLGLSPEVLKRADTQISFGRFTLPHQLMRLVLSEQVYRAFMINVGSPYHK.

2 residues coordinate S-adenosyl-L-methionine: Leu76 and Gly108.

Belongs to the RNA methyltransferase RlmH family. As to quaternary structure, homodimer.

Its subcellular location is the cytoplasm. The enzyme catalyses pseudouridine(1915) in 23S rRNA + S-adenosyl-L-methionine = N(3)-methylpseudouridine(1915) in 23S rRNA + S-adenosyl-L-homocysteine + H(+). Specifically methylates the pseudouridine at position 1915 (m3Psi1915) in 23S rRNA. The protein is Ribosomal RNA large subunit methyltransferase H of Lactiplantibacillus plantarum (strain ATCC BAA-793 / NCIMB 8826 / WCFS1) (Lactobacillus plantarum).